The primary structure comprises 444 residues: Trigger factor (444 aa).

Residues 160–245 enclose the PPIase FKBP-type domain; it reads DMQVTFDFEG…VKQVEKPKLP (86 aa).

It belongs to the FKBP-type PPIase family. Tig subfamily.

It localises to the cytoplasm. It carries out the reaction [protein]-peptidylproline (omega=180) = [protein]-peptidylproline (omega=0). Functionally, involved in protein export. Acts as a chaperone by maintaining the newly synthesized protein in an open conformation. Functions as a peptidyl-prolyl cis-trans isomerase. The polypeptide is Trigger factor (Acinetobacter baumannii (strain SDF)).